We begin with the raw amino-acid sequence, 107 residues long: UPF0145 protein Ent638_1382 (107 aa).

It belongs to the UPF0145 family.

This is UPF0145 protein Ent638_1382 from Enterobacter sp. (strain 638).